Reading from the N-terminus, the 251-residue chain is MSGHSKWATTKHKKAAIDAKRGKLFAKLIKNIEVAARTGGGDPEGNPTLYDAIQKAKKSSVPNDNIERARKRGAGEEAGGADWQTIMYEGYGPNGVAVLIECLTDNRNRAAGEVRVAMTRNGGNMADPGSVAYLFHRKGIVTLEKNGLSEDDVLMAVLDAGAEEVNDLGESFEIISEPGDLVAVRSALQSAGIDYESAESGFQPSVSVAVDAEGARKVFKLIDALEDSDDVQNVYTNVDVSDEVLAQLDTD.

It belongs to the TACO1 family.

It localises to the cytoplasm. This chain is Probable transcriptional regulatory protein NFA_37020, found in Nocardia farcinica (strain IFM 10152).